A 446-amino-acid polypeptide reads, in one-letter code: MDLELQDFYNKTLATENNTAATRNSDFPVWDDYKSSVDDLQYFLIGLYTFVSLLGFMGNLLILMALMRKRNQKTMVNFLIGNLAFSDILVVLFCSPFTLTSVLLDQWMFGKVMCHIMPFLQCVSVLVSTLILISIAIVRYHMIKHPISNNLTANHGYFLIATVWTLGFAICSPLPVFHSLVELQETFDSALLSSRYLCVESWPSDSYRIAFTISLLLVQYILPLVCLTVSHTSVCRSISCGLSNKENKLEENEMINLTLQPFKKSGPQVKLSSSHKWSYSFIRKHRRRYSKKTACVLPAPARPPQENHSRMLPENFGSVRSQHSSSSKFIPGVPTCFEVKPEENSDVHDMRVNRSIMRIKKRSRSVFYRLTILILVFAVSWMPLHLFHVVTDFNDNLISNRHFKLVYCICHLLGMMSCCLNPILYGFLNNGIKADLISLIQCLHMS.

The Extracellular portion of the chain corresponds to 1–42 (MDLELQDFYNKTLATENNTAATRNSDFPVWDDYKSSVDDLQY). 2 N-linked (GlcNAc...) asparagine glycosylation sites follow: Asn10 and Asn17. Residues 43–63 (FLIGLYTFVSLLGFMGNLLIL) form a helical membrane-spanning segment. Topologically, residues 64–77 (MALMRKRNQKTMVN) are cytoplasmic. Residues 78–98 (FLIGNLAFSDILVVLFCSPFT) traverse the membrane as a helical segment. The Extracellular portion of the chain corresponds to 99–117 (LTSVLLDQWMFGKVMCHIM). Cys114 and Cys198 are joined by a disulfide. Residues 118-138 (PFLQCVSVLVSTLILISIAIV) traverse the membrane as a helical segment. At 139 to 156 (RYHMIKHPISNNLTANHG) the chain is on the cytoplasmic side. The helical transmembrane segment at 157-177 (YFLIATVWTLGFAICSPLPVF) threads the bilayer. The Extracellular segment spans residues 178–208 (HSLVELQETFDSALLSSRYLCVESWPSDSYR). Residues 209 to 229 (IAFTISLLLVQYILPLVCLTV) traverse the membrane as a helical segment. Topologically, residues 230–369 (SHTSVCRSIS…KKRSRSVFYR (140 aa)) are cytoplasmic. A helical membrane pass occupies residues 370–390 (LTILILVFAVSWMPLHLFHVV). Topologically, residues 391 to 407 (TDFNDNLISNRHFKLVY) are extracellular. A helical membrane pass occupies residues 408-428 (CICHLLGMMSCCLNPILYGFL). The Cytoplasmic portion of the chain corresponds to 429-446 (NNGIKADLISLIQCLHMS). The S-palmitoyl cysteine moiety is linked to residue Cys442.

The protein belongs to the G-protein coupled receptor 1 family.

The protein resides in the cell membrane. Functionally, receptor for neuropeptide Y and peptide YY. The activity of this receptor is mediated by G proteins that inhibit adenylate cyclase activity. Seems to be associated with food intake. Could be involved in feeding disorders. The protein is Neuropeptide Y receptor type 5 (NPY5R) of Canis lupus familiaris (Dog).